The following is a 78-amino-acid chain: HssA/B-like protein 30 (78 aa).

The segment at 1–32 (MTLFSSITSISKTNTSSKSSVNSLSGSSLSMG) is disordered.

This sequence belongs to the hssA/B family.

The chain is HssA/B-like protein 30 (hssl30) from Dictyostelium discoideum (Social amoeba).